Here is a 721-residue protein sequence, read N- to C-terminus: BBSome complex member BBS2 (721 aa).

Positions Lys325–Glu369 form a coiled coil.

In terms of assembly, part of BBSome complex, that contains BBS1, BBS2, BBS4, BBS5, BBS7, BBS8/TTC8, BBS9 and BBIP10. Interacts (via C-terminus) with BBS7. Interacts (via coiled coil domain) with MKKS. Interacts with CCDC28B. Interacts with DLEC1.

The protein resides in the cell projection. It is found in the cilium membrane. It localises to the cytoplasm. The protein localises to the cytoskeleton. Its subcellular location is the microtubule organizing center. The protein resides in the centrosome. It is found in the centriolar satellite. The BBSome complex is thought to function as a coat complex required for sorting of specific membrane proteins to the primary cilia. The BBSome complex is required for ciliogenesis but is dispensable for centriolar satellite function. This ciliogenic function is mediated in part by the Rab8 GDP/GTP exchange factor, which localizes to the basal body and contacts the BBSome. Rab8(GTP) enters the primary cilium and promotes extension of the ciliary membrane. Firstly the BBSome associates with the ciliary membrane and binds to RAB3IP/Rabin8, the guanosyl exchange factor (GEF) for Rab8 and then the Rab8-GTP localizes to the cilium and promotes docking and fusion of carrier vesicles to the base of the ciliary membrane. The BBSome complex, together with the LTZL1, controls SMO ciliary trafficking and contributes to the sonic hedgehog (SHH) pathway regulation. Required for proper BBSome complex assembly and its ciliary localization. The sequence is that of BBSome complex member BBS2 (Bbs2) from Mus musculus (Mouse).